The chain runs to 296 residues: Cobalamin trafficking protein CblD (296 aa).

Residues 1 to 38 (MAHVLCNRARLVSYLPGFCSLVKRVINPRAFSTAGSSG) constitute a mitochondrion transit peptide. Lys-203 bears the N6-acetyllysine mark.

In terms of assembly, heterodimer with MMACHC. Forms a multiprotein complex with MMACHC, MTR and MTRR.

Its subcellular location is the cytoplasm. The protein localises to the mitochondrion. Functionally, involved in cobalamin metabolism and trafficking. Plays a role in regulating the biosynthesis and the proportion of two coenzymes, methylcob(III)alamin (MeCbl) and 5'-deoxyadenosylcobalamin (AdoCbl). Promotes oxidation of cob(II)alamin bound to MMACHC. The processing of cobalamin in the cytosol occurs in a multiprotein complex composed of at least MMACHC, MMADHC, MTRR (methionine synthase reductase) and MTR (methionine synthase) which may contribute to shuttle safely and efficiently cobalamin towards MTR in order to produce methionine. This is Cobalamin trafficking protein CblD from Mus musculus (Mouse).